The following is a 100-amino-acid chain: Trp operon repressor homolog (100 aa).

A DNA-binding region spans residues 59–82; it reads QRQISQMLGVGIATITRGSNELKS. The span at 78-93 shows a compositional bias: basic and acidic residues; sequence NELKSKSDTDKDKLKT. A disordered region spans residues 78-100; sequence NELKSKSDTDKDKLKTLLEQGAQ.

This sequence belongs to the TrpR family. In terms of assembly, homodimer.

It is found in the cytoplasm. In terms of biological role, this protein is an aporepressor. When complexed with L-tryptophan it binds the operator region of the trp operon and prevents the initiation of transcription. This Vibrio campbellii (strain ATCC BAA-1116) protein is Trp operon repressor homolog.